Consider the following 214-residue polypeptide: Oxaloacetate tautomerase fahd-1, mitochondrial (214 aa).

Residues E65, E67, and D96 each coordinate Mg(2+).

Belongs to the FAH family. Mg(2+) serves as cofactor. The cofactor is Mn(2+). As to expression, widely expressed.

It localises to the mitochondrion. The catalysed reaction is oxaloacetate = enol-oxaloacetate. In terms of biological role, tautomerase that converts enol-oxaloacetate, a strong inhibitor of succinate dehydrogenase, to the physiological keto form of oxaloacetate. This is Oxaloacetate tautomerase fahd-1, mitochondrial from Caenorhabditis elegans.